Here is a 112-residue protein sequence, read N- to C-terminus: uncharacterized protein (112 aa).

Its subcellular location is the plastid. It is found in the chloroplast. This is an uncharacterized protein from Chlamydomonas reinhardtii (Chlamydomonas smithii).